We begin with the raw amino-acid sequence, 523 residues long: GMP synthase [glutamine-hydrolyzing] (523 aa).

Positions lysine 8 to lysine 205 constitute a Glutamine amidotransferase type-1 domain. Cysteine 85 serves as the catalytic Nucleophile. Active-site residues include histidine 179 and glutamate 181. The region spanning tryptophan 206–arginine 398 is the GMPS ATP-PPase domain. Serine 233–serine 239 is a binding site for ATP.

In terms of assembly, homodimer.

It carries out the reaction XMP + L-glutamine + ATP + H2O = GMP + L-glutamate + AMP + diphosphate + 2 H(+). Its pathway is purine metabolism; GMP biosynthesis; GMP from XMP (L-Gln route): step 1/1. Its function is as follows. Catalyzes the synthesis of GMP from XMP. This is GMP synthase [glutamine-hydrolyzing] from Actinobacillus pleuropneumoniae serotype 3 (strain JL03).